The following is a 441-amino-acid chain: Serine/threonine-protein phosphatase 2A activator 1 (441 aa).

Composition is skewed to polar residues over residues 66 to 75 (NIPPSNTTHS) and 421 to 432 (QRQDDLNSTTYR). 2 disordered regions span residues 66-100 (NIPPSNTTHSRPLDLPPPQGEEEGDKCNISHSSNQ) and 421-441 (QRQDDLNSTTYRGRQPRLGRN).

This sequence belongs to the PTPA-type PPIase family.

It localises to the cytoplasm. The protein resides in the nucleus. It catalyses the reaction [protein]-peptidylproline (omega=180) = [protein]-peptidylproline (omega=0). In terms of biological role, PPIases accelerate the folding of proteins. It catalyzes the cis-trans isomerization of proline imidic peptide bonds in oligopeptides. Acts as a regulatory subunit for PP2A-like phosphatases modulating their activity or substrate specificity, probably by inducing a conformational change in the catalytic subunit, a direct target of the PPIase. Can reactivate inactive phosphatase PP2A-phosphatase methylesterase complexes (PP2Ai) in presence of ATP and Mg(2+) by dissociating the inactive form from the complex. This Debaryomyces hansenii (strain ATCC 36239 / CBS 767 / BCRC 21394 / JCM 1990 / NBRC 0083 / IGC 2968) (Yeast) protein is Serine/threonine-protein phosphatase 2A activator 1 (RRD1).